The primary structure comprises 472 residues: Homeobox protein PKNOX2 (472 aa).

Residues 1-62 (MMQHASPAPA…STPVPSAPID (62 aa)) are disordered. Positions 26–38 (DSPQMTATTQPPS) are enriched in polar residues. The segment covering 46-56 (SAPSAAASTPV) has biased composition (low complexity). In terms of domain architecture, MEIS N-terminal spans 96–179 (GSECITSASF…MHSDNLLRND (84 aa)). The segment at residues 291–350 (KRGVLPKHATNIMRSWLFQHLMHPYPTEDEKRQIAAQTNLTLLQVNNWFVNARRRILQPM) is a DNA-binding region (homeobox). 3 disordered regions span residues 351 to 371 (LDAS…QHRP), 386 to 405 (QQQG…LDNL), and 423 to 472 (AAHD…DSLV). Residues 361-371 (KAKKIKSQHRP) are compositionally biased toward basic residues. The span at 396–405 (PDGSINLDNL) shows a compositional bias: polar residues. Over residues 429–454 (LDGTEEEDEDEMEEEEEEELEEEVDE) the composition is skewed to acidic residues.

The protein belongs to the TALE/MEIS homeobox family.

It localises to the nucleus. The protein is Homeobox protein PKNOX2 (PKNOX2) of Pongo abelii (Sumatran orangutan).